Here is a 138-residue protein sequence, read N- to C-terminus: ATP synthase epsilon chain (138 aa).

The protein belongs to the ATPase epsilon chain family. As to quaternary structure, F-type ATPases have 2 components, CF(1) - the catalytic core - and CF(0) - the membrane proton channel. CF(1) has five subunits: alpha(3), beta(3), gamma(1), delta(1), epsilon(1). CF(0) has three main subunits: a, b and c.

The protein localises to the cell membrane. Functionally, produces ATP from ADP in the presence of a proton gradient across the membrane. This is ATP synthase epsilon chain from Polynucleobacter asymbioticus (strain DSM 18221 / CIP 109841 / QLW-P1DMWA-1) (Polynucleobacter necessarius subsp. asymbioticus).